The sequence spans 609 residues: Mitogen-activated protein kinase kinase kinase 3 (609 aa).

A disordered region spans residues 1–202; it reads MPTWWGRKSC…SAVHGSRIGG (202 aa). Over residues 11 to 28 the composition is skewed to basic and acidic residues; that stretch reads KNKDDNHRGIISTDRDIK. Composition is skewed to low complexity over residues 40–64 and 90–108; these read PTRG…GFDS and VSGS…SSGS. Residues 214 to 470 enclose the Protein kinase domain; sequence WKKGKFLGSG…ASQLLEHPFL (257 aa). Residues 220-228 and Lys243 each bind ATP; that span reads LGSGTFGQV. The active-site Proton acceptor is the Asp339. Disordered regions lie at residues 487–511 and 590–609; these read PRSY…SHDN and MEPS…SRLV. The segment covering 594–609 has biased composition (polar residues); that stretch reads SFRTQTPNSPLRSRLV.

Belongs to the protein kinase superfamily. STE Ser/Thr protein kinase family. MAP kinase kinase kinase subfamily. Interacts with PBL27. As to expression, expressed in flower buds, roots, leaves, seedlings, stems and immature siliques. Absent of mature pollen.

It carries out the reaction L-seryl-[protein] + ATP = O-phospho-L-seryl-[protein] + ADP + H(+). It catalyses the reaction L-threonyl-[protein] + ATP = O-phospho-L-threonyl-[protein] + ADP + H(+). The protein is Mitogen-activated protein kinase kinase kinase 3 of Arabidopsis thaliana (Mouse-ear cress).